A 271-amino-acid polypeptide reads, in one-letter code: Regulatory protein RecX (271 aa).

Belongs to the RecX family.

The protein localises to the cytoplasm. Modulates RecA activity. This Lactobacillus gasseri (strain ATCC 33323 / DSM 20243 / BCRC 14619 / CIP 102991 / JCM 1131 / KCTC 3163 / NCIMB 11718 / NCTC 13722 / AM63) protein is Regulatory protein RecX.